Here is a 195-residue protein sequence, read N- to C-terminus: Imidazoleglycerol-phosphate dehydratase (195 aa).

This sequence belongs to the imidazoleglycerol-phosphate dehydratase family.

Its subcellular location is the cytoplasm. It carries out the reaction D-erythro-1-(imidazol-4-yl)glycerol 3-phosphate = 3-(imidazol-4-yl)-2-oxopropyl phosphate + H2O. It participates in amino-acid biosynthesis; L-histidine biosynthesis; L-histidine from 5-phospho-alpha-D-ribose 1-diphosphate: step 6/9. The protein is Imidazoleglycerol-phosphate dehydratase of Polynucleobacter necessarius subsp. necessarius (strain STIR1).